Reading from the N-terminus, the 498-residue chain is MDNELFMNTEFPPPPEMATHFEHQQSSSSAMMLNWALMDPNPHQDSSFLWEKSTEQQQQQSIFDSALSSLVSSPTPSNSNFSGGGGDGFLIRELIGKLGNIGNNNNNSGEIYGTPMSRSASCYATPMSSPPPPTNSNSQMMMNRTTPLTEFSADPGFAERAARFSCFGSRSFNGRTNTNLPINNGNNMVNNSGKLTRVSSTPALKALVSPEVTPGGEFSRKRKSVPKGKSKENPISTASPSPSFSKTAEKNGGKGGSKSSEEKGGKRRREEEDDEEEEGEGEGNKSNNTKPPEPPKDYIHVRARRGQATDSHSLAERVRREKIGERMKLLQDLVPGCNKVTGKALMLDEIINYVQSLQRQVEFLSMKLSSVNDTRLDFNVDALVSKDVMIPSSNNRLHEEGLQSKSSSHHHQQQLNIYNNNSQLLPNISSNNMMLQSPMNSLETSTLARSFTHLPTLTQFTDSISQYQMFSEEDLQSIVGMGVAENPNNESQHMKIEL.

2 disordered regions span residues 1 to 24 (MDNELFMNTEFPPPPEMATHFEHQ) and 207 to 297 (LVSP…PPKD). The span at 233–246 (NPISTASPSPSFSK) shows a compositional bias: polar residues. Basic and acidic residues predominate over residues 259–270 (SSEEKGGKRRRE). Residues 271–281 (EEDDEEEEGEG) show a composition bias toward acidic residues. Residues 307 to 357 (QATDSHSLAERVRREKIGERMKLLQDLVPGCNKVTGKALMLDEIINYVQSL) form the bHLH domain.

In terms of assembly, homodimer. Binds reversibly to CRY2 after blue light illumination. In terms of tissue distribution, expressed constitutively in roots, leaves, stems, and flowers.

It localises to the nucleus. In terms of biological role, transcription factor that binds DNA to G box 5'-CACGTG-3' and to E-box 5'-CANNTG-3'. Binds to chromatin DNA of the FT gene and promotes its expression, and thus triggers flowering in response to blue light. This is Transcription factor bHLH78 (BHLH78) from Arabidopsis thaliana (Mouse-ear cress).